The chain runs to 340 residues: GTPase Obg (340 aa).

The 159-residue stretch at 1–159 (MGFIDEVKLC…KHVLLKLKVL (159 aa)) folds into the Obg domain. In terms of domain architecture, OBG-type G spans 160–329 (SDVGIIGMPN…LSEKLKKSNS (170 aa)). Residues 166 to 173 (GMPNAGKS), 191 to 195 (FTTVR), 212 to 215 (DIPG), 279 to 282 (NKCD), and 310 to 312 (NGD) each bind GTP. Mg(2+) is bound by residues S173 and T193.

This sequence belongs to the TRAFAC class OBG-HflX-like GTPase superfamily. OBG GTPase family. Monomer. The cofactor is Mg(2+).

It localises to the cytoplasm. Functionally, an essential GTPase which binds GTP, GDP and possibly (p)ppGpp with moderate affinity, with high nucleotide exchange rates and a fairly low GTP hydrolysis rate. Plays a role in control of the cell cycle, stress response, ribosome biogenesis and in those bacteria that undergo differentiation, in morphogenesis control. The polypeptide is GTPase Obg (Wolbachia sp. subsp. Drosophila simulans (strain wRi)).